The chain runs to 89 residues: Large ribosomal subunit protein bL28 (89 aa).

This sequence belongs to the bacterial ribosomal protein bL28 family.

This is Large ribosomal subunit protein bL28 from Chlamydia caviae (strain ATCC VR-813 / DSM 19441 / 03DC25 / GPIC) (Chlamydophila caviae).